The primary structure comprises 308 residues: Tyrosine recombinase XerD (308 aa).

One can recognise a Core-binding (CB) domain in the interval 3 to 89 (NGFTRLTEQF…SIHEFHRFAL (87 aa)). The Tyr recombinase domain occupies 110–301 (TLPDVLTVDE…SPETLIETYL (192 aa)). Catalysis depends on residues Arg153, Lys177, His253, Arg256, and His279. The O-(3'-phospho-DNA)-tyrosine intermediate role is filled by Tyr288.

Belongs to the 'phage' integrase family. XerD subfamily. As to quaternary structure, forms a cyclic heterotetrameric complex composed of two molecules of XerC and two molecules of XerD.

It localises to the cytoplasm. Its function is as follows. Site-specific tyrosine recombinase, which acts by catalyzing the cutting and rejoining of the recombining DNA molecules. The XerC-XerD complex is essential to convert dimers of the bacterial chromosome into monomers to permit their segregation at cell division. It also contributes to the segregational stability of plasmids. The protein is Tyrosine recombinase XerD of Bifidobacterium longum (strain NCC 2705).